Reading from the N-terminus, the 537-residue chain is Phosphoenolpyruvate carboxykinase (ATP) (537 aa).

Positions 61, 195, and 201 each coordinate substrate. ATP-binding positions include lysine 201, histidine 220, and 236–244; that span reads GLSGTGKTT. Residues lysine 201 and histidine 220 each coordinate Mn(2+). Position 257 (aspartate 257) interacts with Mn(2+). Glutamate 285 lines the ATP pocket. Residues 312 to 321 are compositionally biased toward basic and acidic residues; it reads DFNDGSKTEN. The disordered stretch occupies residues 312–339; that stretch reads DFNDGSKTENTRSAYPLESIPNASPTGR. Substrate is bound at residue arginine 323. The ATP site is built by arginine 323 and threonine 448.

Belongs to the phosphoenolpyruvate carboxykinase (ATP) family. It depends on Mn(2+) as a cofactor.

Its subcellular location is the cytoplasm. The enzyme catalyses oxaloacetate + ATP = phosphoenolpyruvate + ADP + CO2. It participates in carbohydrate biosynthesis; gluconeogenesis. Functionally, involved in the gluconeogenesis. Catalyzes the conversion of oxaloacetate (OAA) to phosphoenolpyruvate (PEP) through direct phosphoryl transfer between the nucleoside triphosphate and OAA. The sequence is that of Phosphoenolpyruvate carboxykinase (ATP) from Rhodopseudomonas palustris (strain BisB18).